We begin with the raw amino-acid sequence, 374 residues long: uncharacterized protein (374 aa).

The first 26 residues, 1–26 (MNNLIKAYAAGVMSAAFLFGSEGRVR), serve as a signal peptide directing secretion.

This is an uncharacterized protein from Treponema pallidum (strain Nichols).